A 338-amino-acid polypeptide reads, in one-letter code: Lipoate-protein ligase A (338 aa).

The region spanning 29–216 is the BPL/LPL catalytic domain; that stretch reads PATQRVLFLW…AFFAHYGERV (188 aa). ATP contacts are provided by residues Arg-71, 76 to 79, and Lys-134; that span reads GAVF. Lys-134 is a (R)-lipoate binding site.

This sequence belongs to the LplA family. In terms of assembly, monomer.

It is found in the cytoplasm. The catalysed reaction is L-lysyl-[lipoyl-carrier protein] + (R)-lipoate + ATP = N(6)-[(R)-lipoyl]-L-lysyl-[lipoyl-carrier protein] + AMP + diphosphate + H(+). The protein operates within protein modification; protein lipoylation via exogenous pathway; protein N(6)-(lipoyl)lysine from lipoate: step 1/2. Its pathway is protein modification; protein lipoylation via exogenous pathway; protein N(6)-(lipoyl)lysine from lipoate: step 2/2. Functionally, catalyzes both the ATP-dependent activation of exogenously supplied lipoate to lipoyl-AMP and the transfer of the activated lipoyl onto the lipoyl domains of lipoate-dependent enzymes. The sequence is that of Lipoate-protein ligase A from Escherichia coli O139:H28 (strain E24377A / ETEC).